The sequence spans 261 residues: Calbindin (261 aa).

An N-acetylalanine modification is found at alanine 2. An interaction with RANBP9 region spans residues 2-7; sequence AESHLQ. EF-hand domains follow at residues 11 to 46, 53 to 88, 98 to 133, 142 to 177, and 186 to 221; these read ITAS…LLQA, ELSP…EENF, KSCE…LLEK, KLAE…QENF, and MCGK…LCEK. 5 residues coordinate Ca(2+): aspartate 24, aspartate 26, serine 28, tyrosine 30, and glutamate 35. Residues aspartate 111, aspartate 113, serine 115, glutamate 122, aspartate 155, asparagine 157, aspartate 159, lysine 161, glutamate 166, aspartate 199, aspartate 201, asparagine 203, tyrosine 205, and glutamate 210 each coordinate Ca(2+).

This sequence belongs to the calbindin family. Interacts with RANBP9. Expressed in the modiolar nerve root and in bushy neurons in the ventral cochlear nucleus (at protein level).

Buffers cytosolic calcium. May stimulate a membrane Ca(2+)-ATPase and a 3',5'-cyclic nucleotide phosphodiesterase. In Mus musculus (Mouse), this protein is Calbindin (Calb1).